The primary structure comprises 715 residues: Palmitoyltransferase ZDHHC5 (715 aa).

At 1–13 (MPAESGKRFKPSK) the chain is on the cytoplasmic side. The helical transmembrane segment at 14–34 (YVPVSAAAIFLVGATTLFFAF) threads the bilayer. The Extracellular portion of the chain corresponds to 35 to 38 (TCPG). The chain crosses the membrane as a helical span at residues 39–59 (LSLYVSPAVPIYNAIMFLFVL). Residues 60–148 (ANFSMATFMD…NCIGRRNYRY (89 aa)) are Cytoplasmic-facing. Residue Y91 is modified to Phosphotyrosine; by LYN. Residues 104–154 (KWCATCRFYRPPRCSHCSVCDNCVEEFDHHCPWVNNCIGRRNYRYFFLFLL) enclose the DHHC domain. C134 functions as the S-palmitoyl cysteine intermediate in the catalytic mechanism. A helical membrane pass occupies residues 149–169 (FFLFLLSLTAHIMGVFGFGLL). Residues 170–191 (YVLYHIEELSGVRTAVTMAVMC) lie on the Extracellular side of the membrane. Residues 192-212 (VAGLFFIPVAGLTGFHVVLVA) traverse the membrane as a helical segment. Topologically, residues 213-715 (RGRTTNEQVT…VGGTTYEISV (503 aa)) are cytoplasmic. S247 is modified (phosphoserine). Residues 289–715 (GELRRTKSKG…VGGTTYEISV (427 aa)) form a disordered region. T294 carries the phosphothreonine modification. 2 positions are modified to phosphoserine: S296 and S299. T303 is subject to Phosphothreonine. Phosphoserine is present on S345. T348 and T350 each carry phosphothreonine. The segment covering 359–373 (SSSSTSAAMPHSSSA) has biased composition (low complexity). Residues S380, S398, S406, and S409 each carry the phosphoserine modification. T411 carries the post-translational modification Phosphothreonine. Residues S415, S425, S429, and S432 each carry the phosphoserine modification. Over residues 422 to 432 (SSGSRSSSLKS) the composition is skewed to low complexity. T436 bears the Phosphothreonine mark. The span at 442-478 (QLQSIRSEGTTSTSYKSLANQTRNGSLSYDSLLTPSD) shows a compositional bias: polar residues. A Phosphoserine modification is found at S529. Y533 bears the Phosphotyrosine; by FYN mark. Residue S554 is modified to Phosphoserine. An Omega-N-methylarginine modification is found at R617. S621 is modified (phosphoserine). T659 bears the Phosphothreonine mark. The span at 666–677 (LKTTYSKSNGQP) shows a compositional bias: polar residues. Phosphoserine is present on residues S684 and S694. Omega-N-methylarginine is present on R697.

This sequence belongs to the DHHC palmitoyltransferase family. ERF2/ZDHHC9 subfamily. Post-translationally, phosphorylation regulates association with endocytic proteins and its subcellular localization. Phosphorylation by LYN during fatty acid uptake leads to inactivation of the activity. In terms of processing, autopalmitoylated. Palmitoylation of the C-terminal tail regulates stimulation-dependent plasma membrane motility.

It is found in the cell membrane. Its subcellular location is the synapse. The enzyme catalyses L-cysteinyl-[protein] + hexadecanoyl-CoA = S-hexadecanoyl-L-cysteinyl-[protein] + CoA. Palmitoyltransferase that catalyzes the addition of palmitate onto various protein substrates such as CTNND2, CD36, GSDMD, NLRP3, NOD1, NOD2, STAT3 and S1PR1 thus plays a role in various biological processes including cell adhesion, inflammation, fatty acid uptake, bacterial sensing or cardiac functions. Plays an important role in the regulation of synapse efficacy by mediating palmitoylation of delta-catenin/CTNND2, thereby increasing synaptic delivery and surface stabilization of alpha-amino-3-hydroxy-5-methyl-4-isoxazole propionic acid receptors (AMPARs). Under basal conditions, remains at the synaptic membrane through FYN-mediated phosphorylation that prevents association with endocytic proteins. Neuronal activity enhances the internalization and trafficking of DHHC5 from spines to dendritic shafts where it palmitoylates delta-catenin/CTNND2. Regulates cell adhesion at the plasma membrane by palmitoylating GOLGA7B and DSG2. Plays a role in innate immune response by mediating the palmitoylation of NOD1 and NOD2 and their proper recruitment to the bacterial entry site and phagosomes. Also participates in fatty acid uptake by palmitoylating CD36 and thereby targeting it to the plasma membrane. Upon binding of fatty acids to CD36, gets phosphorylated by LYN leading to inactivation and subsequent CD36 caveolar endocytosis. Controls oligodendrocyte development by catalyzing STAT3 palmitoylation. Acts as a regulator of inflammatory response by mediating palmitoylation of NLRP3 and GSDMD. Palmitoylates NLRP3 to promote inflammasome assembly and activation. Activates pyroptosis by catalyzing palmitoylation of gasdermin-D (GSDMD), thereby promoting membrane translocation and pore formation of GSDMD. The sequence is that of Palmitoyltransferase ZDHHC5 from Homo sapiens (Human).